The sequence spans 476 residues: Sulfate adenylyltransferase subunit 1 (476 aa).

The tr-type G domain maps to 24-239 (KSLLRFLTCG…LLETVDVDYE (216 aa)). A G1 region spans residues 33–40 (GSVDDGKS). 33–40 (GSVDDGKS) contributes to the GTP binding site. The interval 91–95 (GITID) is G2. Residues 112–115 (DTPG) form a G3 region. Residues 112–116 (DTPGH) and 167–170 (NKMD) contribute to the GTP site. The G4 stretch occupies residues 167–170 (NKMD). Residues 205–207 (SAL) are G5.

It belongs to the TRAFAC class translation factor GTPase superfamily. Classic translation factor GTPase family. CysN/NodQ subfamily. In terms of assembly, heterodimer composed of CysD, the smaller subunit, and CysN.

It catalyses the reaction sulfate + ATP + H(+) = adenosine 5'-phosphosulfate + diphosphate. Its pathway is sulfur metabolism; hydrogen sulfide biosynthesis; sulfite from sulfate: step 1/3. In terms of biological role, with CysD forms the ATP sulfurylase (ATPS) that catalyzes the adenylation of sulfate producing adenosine 5'-phosphosulfate (APS) and diphosphate, the first enzymatic step in sulfur assimilation pathway. APS synthesis involves the formation of a high-energy phosphoric-sulfuric acid anhydride bond driven by GTP hydrolysis by CysN coupled to ATP hydrolysis by CysD. The chain is Sulfate adenylyltransferase subunit 1 from Vibrio parahaemolyticus serotype O3:K6 (strain RIMD 2210633).